Reading from the N-terminus, the 81-residue chain is MTDLFSSPDHTLDALGLRCPEPVMMVRKTVRNMQPGETLLIIADDPATTRDIPGFCTFMEHELVAKETDGLPYRYLIRKGH.

C19 acts as the Cysteine persulfide intermediate in catalysis.

Belongs to the sulfur carrier protein TusA family. Interacts with IscS.

It localises to the cytoplasm. Its pathway is tRNA modification. Functionally, sulfur carrier protein involved in sulfur trafficking in the cell. Part of a sulfur-relay system required for 2-thiolation during synthesis of 2-thiouridine of the modified wobble base 5-methylaminomethyl-2-thiouridine (mnm(5)s(2)U) in tRNA. Interacts with IscS and stimulates its cysteine desulfurase activity. Accepts an activated sulfur from IscS, which is then transferred to TusD, and thus determines the direction of sulfur flow from IscS to 2-thiouridine formation. Also appears to be involved in sulfur transfer for the biosynthesis of molybdopterin. This chain is Sulfur carrier protein TusA, found in Escherichia fergusonii (strain ATCC 35469 / DSM 13698 / CCUG 18766 / IAM 14443 / JCM 21226 / LMG 7866 / NBRC 102419 / NCTC 12128 / CDC 0568-73).